The sequence spans 405 residues: D-threonate kinase (405 aa).

Residues aspartate 12, arginine 59, and 88 to 91 contribute to the substrate site; that span reads KVDS. ATP-binding positions include serine 243, 337–340, and glycine 383; that span reads GGDG.

The protein belongs to the four-carbon acid sugar kinase family.

The enzyme catalyses D-threonate + ATP = 4-O-phospho-D-threonate + ADP + H(+). In terms of biological role, catalyzes the ATP-dependent phosphorylation of D-threonate to D-threonate 4-phosphate. Can also phosphorylate 4-hydroxy-L-threonine, with lower efficiency. The sequence is that of D-threonate kinase from Bordetella bronchiseptica (strain ATCC BAA-588 / NCTC 13252 / RB50) (Alcaligenes bronchisepticus).